The primary structure comprises 308 residues: uncharacterized protein (308 aa).

Residues 6-234 (LHIEGLDKKI…TEKAIIEVQP (229 aa)) enclose the ABC transporter domain. Residue 38–45 (GPNGSGKT) participates in ATP binding.

This sequence belongs to the ABC transporter superfamily.

This is an uncharacterized protein from Bacillus subtilis (strain 168).